A 492-amino-acid chain; its full sequence is MSLIVLGTASHVGKSMTVAALCRALYRRGIPVAPFKSQNMSLNSYVTVDGSEIGIAQAVQAFAAGIEPEADMNPILLKPKGDSVSQVVLLGRPYKDVQIRDYYRETDTLLAEAVSAFERLRSRFGNVVVEGAGGAAEVNLYDRDIANIRLARSLRLPIVLVADIERGGVFAQVYGTLALLPEDIRPLVAGIIVNKFRGDPGLFAPGVAKLEELTGVPVLGVVPFADIPLPSEDSLSIADKRDRKTGTPVRIAVVRLPRISNFTDFELLEEHVAVDYVPPGGTLSGYDCIILPGTKNTVEDLAALNRHGVGEELRLARERGVPIIGICGGYQMLGRRIVDAGIESENPAEYAGFGLLDVVTAFTGYRKTTVQVRRRATGPGPILPAMGEVDGYEIHMGETERGDLSEAFAGEGASTPDGLVFGTYMHGLFQNPGAANALLAYLAKRRGVAFEPVTAESTALGAAASYDDLARHFEEHVDMDAIMKYFIDRRSE.

Residues 248–434 (PVRIAVVRLP…MHGLFQNPGA (187 aa)) form the GATase cobBQ-type domain. Residue cysteine 327 is the Nucleophile of the active site. Histidine 426 is an active-site residue.

The protein belongs to the CobB/CobQ family. CobQ subfamily.

The protein operates within cofactor biosynthesis; adenosylcobalamin biosynthesis. Catalyzes amidations at positions B, D, E, and G on adenosylcobyrinic A,C-diamide. NH(2) groups are provided by glutamine, and one molecule of ATP is hydrogenolyzed for each amidation. The chain is Probable cobyric acid synthase from Methanoculleus marisnigri (strain ATCC 35101 / DSM 1498 / JR1).